A 372-amino-acid polypeptide reads, in one-letter code: Probable L-tyrosine/L-aspartate decarboxylase (372 aa).

At K215 the chain carries N6-(pyridoxal phosphate)lysine.

Belongs to the group II decarboxylase family. MfnA subfamily. Pyridoxal 5'-phosphate serves as cofactor.

It catalyses the reaction L-tyrosine + H(+) = tyramine + CO2. It carries out the reaction L-aspartate + H(+) = beta-alanine + CO2. It functions in the pathway cofactor biosynthesis; methanofuran biosynthesis. Its pathway is cofactor biosynthesis; coenzyme A biosynthesis. Its function is as follows. Catalyzes the decarboxylation of L-tyrosine to produce tyramine for methanofuran biosynthesis. Can also catalyze the decarboxylation of L-aspartate to produce beta-alanine for coenzyme A (CoA) biosynthesis. The chain is Probable L-tyrosine/L-aspartate decarboxylase from Methanopyrus kandleri (strain AV19 / DSM 6324 / JCM 9639 / NBRC 100938).